The following is a 156-amino-acid chain: Small ribosomal subunit protein uS7 (156 aa).

The protein belongs to the universal ribosomal protein uS7 family. As to quaternary structure, part of the 30S ribosomal subunit. Contacts proteins S9 and S11.

In terms of biological role, one of the primary rRNA binding proteins, it binds directly to 16S rRNA where it nucleates assembly of the head domain of the 30S subunit. Is located at the subunit interface close to the decoding center, probably blocks exit of the E-site tRNA. This Streptococcus pyogenes serotype M1 protein is Small ribosomal subunit protein uS7.